We begin with the raw amino-acid sequence, 1103 residues long: Kinesin-like protein KIF1C (1103 aa).

The Kinesin motor domain occupies 5–348 (SVKVAVRVRP…LRYADRTKQI (344 aa)). 97 to 104 (GQTGAGKS) is a binding site for ATP. Residue Ser-295 is modified to Phosphoserine. 2 coiled-coil regions span residues 359–388 (NARLIRELQEEVARLRELLMAQGLSASALE) and 438–479 (EEAM…LAEM). The tract at residues 400–438 (ALPAVSSPPAPVSPSSPTTHNGELEPSFSPNTESQIGPE) is disordered. Ser-494 bears the Phosphoserine mark. The 68-residue stretch at 523-590 (TRVGQVDMDI…LKSGNRIVMG (68 aa)) folds into the FHA domain. Residues 633–674 (EQQGIDIKLEMEKRLQDLENQYRKEKEEADLLLEQQRLYADS) adopt a coiled-coil conformation. Residues Ser-674 and Ser-676 each carry the phosphoserine modification. Disordered stretches follow at residues 808-828 (GEEEGGGAGSGGGSEEGARGA), 874-924 (LAQD…WERV), and 950-1103 (QGLQ…GAAV). The segment covering 813-822 (GGAGSGGGSE) has biased composition (gly residues). The stretch at 828-872 (AEVEDLRAHIDKLTGILQEVKLQNSSKDRELQALRDRMLRMERVI) forms a coiled coil. Low complexity predominate over residues 893-910 (PEGSEAAEEAAPSDRMPS). Ser-915 bears the Phosphoserine mark. Positions 953–962 (QGSGGRGGGL) are enriched in gly residues. A compositionally biased stretch (basic residues) spans 1021–1031 (PSPRRSHHPRR). A Phosphoserine modification is found at Ser-1033. Arg-1041 is subject to Omega-N-methylarginine. The segment covering 1062-1083 (PQPPQPYPAQRPPGPRYPPYTT) has biased composition (pro residues). Thr-1083 is subject to Phosphothreonine. At Ser-1092 the chain carries Phosphoserine. The span at 1092-1103 (SAPDLKESGAAV) shows a compositional bias: basic and acidic residues.

It belongs to the TRAFAC class myosin-kinesin ATPase superfamily. Kinesin family. Unc-104 subfamily. In terms of assembly, monomer. Interacts with BICD2. In terms of processing, phosphorylated on tyrosine residues. Expressed in all tissues examined, with most abundant expression in heart and skeletal muscle.

It localises to the cytoplasm. It is found in the cytoskeleton. Motor required for the retrograde transport of Golgi vesicles to the endoplasmic reticulum. Has a microtubule plus end-directed motility. In Homo sapiens (Human), this protein is Kinesin-like protein KIF1C (KIF1C).